The following is a 233-amino-acid chain: Pyridoxal phosphate homeostasis protein (233 aa).

Lysine 36 carries the N6-(pyridoxal phosphate)lysine modification.

This sequence belongs to the pyridoxal phosphate-binding protein YggS/PROSC family.

Pyridoxal 5'-phosphate (PLP)-binding protein, which is involved in PLP homeostasis. In Vibrio alginolyticus, this protein is Pyridoxal phosphate homeostasis protein.